The sequence spans 387 residues: WD repeat-containing protein 55 (387 aa).

A compositionally biased stretch (basic and acidic residues) spans 1-10; that stretch reads MATPTEHEDL. A disordered region spans residues 1–24; it reads MATPTEHEDLSEQEVTEDEFKTPK. WD repeat units follow at residues 33–72, 79–118, 122–160, 163–202, 205–244, 247–286, and 290–329; these read KLEAIVNTIAFHPKQDILAAGDIDGDIYLFSYSCTEGENK, HHLKSCRKVLFSSDGQKLFSVSKDKAIHIMDVEAGKLETR, AHKVPINAMLLIDENIFATGDDEGTLKVWDMRKGTSFMD, HHEDYISDITIDQAKRTLLTSSGDGTLGVFNIKRRRFELL, IQNGDLTSVSIMKRGRKVVCGSGEGTIYIFNWNGFGATSD, AVQAESVDCIVPITDSILCAASTDGVIRAINILPNRVVGS, and HVGEAIEEIARCRDTHFLASCAHDELIKFWDISSLPDEKV. Residues 356-387 form a disordered region; the sequence is FFAGLLDTTEENGKEGENDEDDDDEDSDSGSD. Over residues 372–387 the composition is skewed to acidic residues; it reads ENDEDDDDEDSDSGSD.

Belongs to the WD repeat WDR55 family.

Its subcellular location is the nucleus. The protein resides in the nucleolus. In terms of biological role, nucleolar protein that acts as a modulator of rRNA synthesis. Plays a central role during organogenesis. The sequence is that of WD repeat-containing protein 55 (wdr55) from Danio rerio (Zebrafish).